The sequence spans 329 residues: tRNA (guanine(10)-N2)-dimethyltransferase (329 aa).

The region spanning 40–143 (NVENVEIFER…KLWIGIRIRE (104 aa)) is the THUMP domain.

The protein belongs to the methyltransferase superfamily. Trm-G10 family. As to quaternary structure, monomer.

The protein localises to the cytoplasm. It carries out the reaction guanosine(10) in tRNA + 2 S-adenosyl-L-methionine = N(2)-dimethylguanosine(10) in tRNA + 2 S-adenosyl-L-homocysteine + 2 H(+). Its function is as follows. Catalyzes the adenosylmethionine-dependent methylation of the exocyclic amino group (N(2)) of guanosine at position 10 of various tRNAs. Acts via a two-step process that leads to the formation of either N(2)-monomethyl (m(2)G) or N(2)-dimethylguanosine (m(2)(2)G). The polypeptide is tRNA (guanine(10)-N2)-dimethyltransferase (trmG10) (Pyrococcus abyssi (strain GE5 / Orsay)).